We begin with the raw amino-acid sequence, 704 residues long: Polyribonucleotide nucleotidyltransferase (704 aa).

Mg(2+)-binding residues include Asp486 and Asp492. The KH domain occupies 553–612 (PKIVIVKINPDKIRDVIGPGGKQINKIIEETGVKIDTEQDGTIYISSANEEMNARAKQII). The S1 motif domain occupies 622–690 (GEYYLSTVKR…KQGRVNLSRK (69 aa)).

It belongs to the polyribonucleotide nucleotidyltransferase family. The cofactor is Mg(2+).

Its subcellular location is the cytoplasm. The catalysed reaction is RNA(n+1) + phosphate = RNA(n) + a ribonucleoside 5'-diphosphate. Involved in mRNA degradation. Catalyzes the phosphorolysis of single-stranded polyribonucleotides processively in the 3'- to 5'-direction. The sequence is that of Polyribonucleotide nucleotidyltransferase from Lysinibacillus sphaericus (strain C3-41).